A 338-amino-acid polypeptide reads, in one-letter code: Phosphoribosylformylglycinamidine cyclo-ligase (338 aa).

The protein belongs to the AIR synthase family.

It localises to the cytoplasm. The catalysed reaction is 2-formamido-N(1)-(5-O-phospho-beta-D-ribosyl)acetamidine + ATP = 5-amino-1-(5-phospho-beta-D-ribosyl)imidazole + ADP + phosphate + H(+). It participates in purine metabolism; IMP biosynthesis via de novo pathway; 5-amino-1-(5-phospho-D-ribosyl)imidazole from N(2)-formyl-N(1)-(5-phospho-D-ribosyl)glycinamide: step 2/2. The sequence is that of Phosphoribosylformylglycinamidine cyclo-ligase from Thermoplasma volcanium (strain ATCC 51530 / DSM 4299 / JCM 9571 / NBRC 15438 / GSS1).